Reading from the N-terminus, the 345-residue chain is MATVKKDARLTSSQSLMCVGFAGIFSKTVTSPLEVVKILSQVGTFHCKRGFLHSFVLICQNEGLRAFWKGNMVSCLRLFPYSAIHLATYKNIVNLHIDELGDISQWRAIVAGGLAGISAALATYPLEVVETRLIAQNCQEPTYRGLLHSLSVIYRNEGLQALYRGFSLTVLGAVPFSVGCYAVYINLDKLWQERHVRFTSLQNFINGCLAAGVAQTLSFPFETVKKKMQAQSLVLPHCGGVDVHFNGMADCFRQVIKNKGVMALWSGLTANMVKIVPYFGLLFSCFEMCKQVCLYRNGYIISPPSYKLKPGVDQSLGPYELQEFKRYLRNRKSHKAQSSSIGNRW.

Solcar repeat units lie at residues 11 to 100 (TSSQ…IDEL), 104 to 195 (SQWR…QERH), and 199 to 297 (TSLQ…LYRN). Transmembrane regions (helical) follow at residues 16-36 (LMCVGFAGIFSKTVTSPLEVV), 67-87 (FWKGNMVSCLRLFPYSAIHLA), 109-129 (IVAGGLAGISAALATYPLEVV), 165-185 (GFSLTVLGAVPFSVGCYAVYI), 204-224 (FINGCLAAGVAQTLSFPFETV), and 261-281 (VMALWSGLTANMVKIVPYFGL).

It belongs to the mitochondrial carrier (TC 2.A.29) family.

It is found in the mitochondrion inner membrane. The polypeptide is Solute carrier family 25 member 43 (slc25a43) (Danio rerio (Zebrafish)).